A 483-amino-acid chain; its full sequence is AP-3 complex subunit mu (483 aa).

The 272-residue stretch at 211–482 folds into the MHD domain; that stretch reads NNELYVDLLE…KTQTGNFQVR (272 aa).

Belongs to the adaptor complexes medium subunit family. Adaptor protein complex 3 (AP-3) is a heterotetramer composed of 2 large adaptins (APL5 and APL6), a medium adaptin (APM3) and a small adaptin (APS3).

It is found in the golgi apparatus. The protein resides in the cytoplasmic vesicle membrane. Functionally, part of the AP-3 complex, an adaptor-related complex which is not clathrin-associated. The complex is associated with the Golgi region as well as more peripheral structures. It facilitates the budding of vesicles from the Golgi membrane and may be directly involved in trafficking to the vacuole. Required for the transport via the ALP pathway, which directs the transport of the cargo proteins PHO8 and VAM3 to the vacuole. This chain is AP-3 complex subunit mu (APM3), found in Saccharomyces cerevisiae (strain ATCC 204508 / S288c) (Baker's yeast).